Reading from the N-terminus, the 314-residue chain is tRNA pseudouridine synthase B (314 aa).

Residue H43 coordinates substrate. Residue D48 is the Nucleophile of the active site. Residues Y76, Y179, and L200 each coordinate substrate.

The protein belongs to the pseudouridine synthase TruB family. Type 1 subfamily.

It carries out the reaction uridine(55) in tRNA = pseudouridine(55) in tRNA. In terms of biological role, responsible for synthesis of pseudouridine from uracil-55 in the psi GC loop of transfer RNAs. This chain is tRNA pseudouridine synthase B, found in Salmonella typhi.